Reading from the N-terminus, the 374-residue chain is MRLDLSAKFRQVLGLAKDHASIGRAIVQNYNEKAFFDIEVAVVRATSHDDCPVDDKTMHEILFLVSNTPGSIPFLAEQISRRLAKTRDCLVAGKTLLLFHRLLRGSSRSIEQQLHIAHTSGHLQIGCSWFMMSLDSRSFVFLQNYVAYLQERVGWIINQAGKLEPVMSGGTKFSRYKEKSMDLVFHILPKCQEFIAQVLKCSPVDAWPIDNLVQAATGNILKESFQVYMTYSDGMTALVSMLFDLSRPARDLACGMLRKASQQIQDLRILYDKCRGFAGMKSLDYPSVQAISMDHIVALEECSSYGGKRGFSLSTNLRDAITCNELKQEQHSASFSSTSPFSLPVETKISMVWVVFDNEDGEESDKQTEKAYER.

The ENTH domain occupies 30 to 163 (YNEKAFFDIE…GWIINQAGKL (134 aa)).

The protein localises to the membrane. Its subcellular location is the clathrin-coated pit. The protein resides in the golgi apparatus. It is found in the cytoplasmic vesicle. It localises to the clathrin-coated vesicle. The polypeptide is Putative clathrin assembly protein At1g33340 (Arabidopsis thaliana (Mouse-ear cress)).